An 817-amino-acid chain; its full sequence is Probable beta-glucosidase G (817 aa).

An N-terminal signal peptide occupies residues 1 to 20 (MASIAHLIFSGLLAATVANS). Asn-40, Asn-58, Asn-229, and Asn-276 each carry an N-linked (GlcNAc...) asparagine glycan. Asp-304 is an active-site residue. Residues Asn-343, Asn-350, Asn-402, Asn-507, Asn-563, Asn-584, Asn-623, Asn-662, Asn-679, and Asn-715 are each glycosylated (N-linked (GlcNAc...) asparagine).

It belongs to the glycosyl hydrolase 3 family.

It localises to the secreted. The enzyme catalyses Hydrolysis of terminal, non-reducing beta-D-glucosyl residues with release of beta-D-glucose.. The protein operates within glycan metabolism; cellulose degradation. In terms of biological role, beta-glucosidases are one of a number of cellulolytic enzymes involved in the degradation of cellulosic biomass. Catalyzes the last step releasing glucose from the inhibitory cellobiose. This is Probable beta-glucosidase G (bglG) from Neosartorya fischeri (strain ATCC 1020 / DSM 3700 / CBS 544.65 / FGSC A1164 / JCM 1740 / NRRL 181 / WB 181) (Aspergillus fischerianus).